The sequence spans 76 residues: Acyl carrier protein (76 aa).

In terms of domain architecture, Carrier spans 1-76 (MATFDDVKDV…AAIDYIESKQ (76 aa)). O-(pantetheine 4'-phosphoryl)serine is present on S36.

The protein belongs to the acyl carrier protein (ACP) family. Post-translationally, 4'-phosphopantetheine is transferred from CoA to a specific serine of apo-ACP by AcpS. This modification is essential for activity because fatty acids are bound in thioester linkage to the sulfhydryl of the prosthetic group.

The protein localises to the cytoplasm. It functions in the pathway lipid metabolism; fatty acid biosynthesis. Carrier of the growing fatty acid chain in fatty acid biosynthesis. This is Acyl carrier protein from Deinococcus deserti (strain DSM 17065 / CIP 109153 / LMG 22923 / VCD115).